We begin with the raw amino-acid sequence, 200 residues long: NADH-quinone oxidoreductase subunit C (200 aa).

It belongs to the complex I 30 kDa subunit family. NDH-1 is composed of 14 different subunits. Subunits NuoB, C, D, E, F, and G constitute the peripheral sector of the complex.

The protein resides in the cell inner membrane. The enzyme catalyses a quinone + NADH + 5 H(+)(in) = a quinol + NAD(+) + 4 H(+)(out). NDH-1 shuttles electrons from NADH, via FMN and iron-sulfur (Fe-S) centers, to quinones in the respiratory chain. The immediate electron acceptor for the enzyme in this species is believed to be ubiquinone. Couples the redox reaction to proton translocation (for every two electrons transferred, four hydrogen ions are translocated across the cytoplasmic membrane), and thus conserves the redox energy in a proton gradient. The protein is NADH-quinone oxidoreductase subunit C of Rhizobium rhizogenes (strain K84 / ATCC BAA-868) (Agrobacterium radiobacter).